A 183-amino-acid polypeptide reads, in one-letter code: uncharacterized protein (183 aa).

This is an uncharacterized protein from Acanthamoeba polyphaga (Amoeba).